We begin with the raw amino-acid sequence, 95 residues long: Protein TusB (95 aa).

This sequence belongs to the DsrH/TusB family. As to quaternary structure, heterohexamer, formed by a dimer of trimers. The hexameric TusBCD complex contains 2 copies each of TusB, TusC and TusD. The TusBCD complex interacts with TusE.

It is found in the cytoplasm. In terms of biological role, part of a sulfur-relay system required for 2-thiolation of 5-methylaminomethyl-2-thiouridine (mnm(5)s(2)U) at tRNA wobble positions. This chain is Protein TusB, found in Yersinia pseudotuberculosis serotype O:1b (strain IP 31758).